A 160-amino-acid chain; its full sequence is Myosin catalytic light chain LC-1, mantle muscle (160 aa).

Residue 1 is subject to Blocked amino end (Xaa). EF-hand domains lie at aspartate 7–asparagine 44, threonine 83–arginine 118, and isoleucine 119–glycine 153.

Functionally, in molluscan muscle, calcium regulation is associated with myosin rather than with actin. Muscle myosin contains two types of light chains: the catalytic light chain, essential for ATPase activity, and the regulatory light chain, a calcium-binding protein responsible for Ca(2+) dependent binding and Ca(2+) dependent Mg-ATPase activity. The chain is Myosin catalytic light chain LC-1, mantle muscle from Todarodes pacificus (Japanese flying squid).